The following is a 407-amino-acid chain: MSAVPLKNDKPVEAGVRTVTVLGATGSIGDSTMDLLRGARGRYRVEALTANSNVEGLVKLAREFDARFVALADTSYFDELKNALAGTGIEYGVGESAIIEAASRPADWLMAAVSGAAGLKPALAAVDRGATIALANKECLVCAGDFFMQRAARAGACVLPADSEHNALFQALSSGNRDELTRVIITASGGPFRTWAAADIENATLAQALKHPNWSMGRKITIDSASMMNKGLEVIEAACLFALEPEEIDVLVHPQSIVHGMVEFSDRSVVAQLGAPDMRTPIAHCLGWPERIAGPAAKLDLVSIGQLTFEAPDFARFPALRLAYDALRTGQGATTVYNAANEIAVAAFIAEKIRFGAIARLVEATLNGWVRAGNLAPLASADDAIAVDHNARNMAASLLPQIAAKAS.

The NADPH site is built by threonine 25, glycine 26, serine 27, isoleucine 28, asparagine 53, and asparagine 136. Residue lysine 137 participates in 1-deoxy-D-xylulose 5-phosphate binding. Glutamate 138 lines the NADPH pocket. Aspartate 162 is a binding site for Mn(2+). Residues serine 163, glutamate 164, serine 188, and histidine 211 each coordinate 1-deoxy-D-xylulose 5-phosphate. Residue glutamate 164 coordinates Mn(2+). Glycine 217 serves as a coordination point for NADPH. 1-deoxy-D-xylulose 5-phosphate contacts are provided by serine 224, asparagine 229, lysine 230, and glutamate 233. Position 233 (glutamate 233) interacts with Mn(2+).

It belongs to the DXR family. Mg(2+) is required as a cofactor. Mn(2+) serves as cofactor.

The enzyme catalyses 2-C-methyl-D-erythritol 4-phosphate + NADP(+) = 1-deoxy-D-xylulose 5-phosphate + NADPH + H(+). It participates in isoprenoid biosynthesis; isopentenyl diphosphate biosynthesis via DXP pathway; isopentenyl diphosphate from 1-deoxy-D-xylulose 5-phosphate: step 1/6. In terms of biological role, catalyzes the NADPH-dependent rearrangement and reduction of 1-deoxy-D-xylulose-5-phosphate (DXP) to 2-C-methyl-D-erythritol 4-phosphate (MEP). The polypeptide is 1-deoxy-D-xylulose 5-phosphate reductoisomerase (Nitrobacter winogradskyi (strain ATCC 25391 / DSM 10237 / CIP 104748 / NCIMB 11846 / Nb-255)).